A 721-amino-acid polypeptide reads, in one-letter code: Polyribonucleotide nucleotidyltransferase (721 aa).

Aspartate 486 and aspartate 492 together coordinate Mg(2+). The KH domain maps to 553 to 612 (PKIVQLQIDIDKISLVIGSTGKTVKAITDEFEVKVQIEQNGKIILFGDDDFKMQKAKERI). In terms of domain architecture, S1 motif spans 622–716 (GEIYEGIVKK…KFGKIDLEVV (95 aa)).

Belongs to the polyribonucleotide nucleotidyltransferase family. Mg(2+) is required as a cofactor.

The protein localises to the cytoplasm. The enzyme catalyses RNA(n+1) + phosphate = RNA(n) + a ribonucleoside 5'-diphosphate. Functionally, involved in mRNA degradation. Catalyzes the phosphorolysis of single-stranded polyribonucleotides processively in the 3'- to 5'-direction. This Borrelia garinii subsp. bavariensis (strain ATCC BAA-2496 / DSM 23469 / PBi) (Borreliella bavariensis) protein is Polyribonucleotide nucleotidyltransferase.